Here is a 158-residue protein sequence, read N- to C-terminus: uncharacterized protein (158 aa).

Residues Glu13–Glu110 form the HTH hxlR-type domain.

This is an uncharacterized protein from Mycobacterium tuberculosis (strain CDC 1551 / Oshkosh).